The chain runs to 508 residues: Transcription termination factor MTERF4, chloroplastic (508 aa).

The N-terminal 79 residues, 1–79 (MMKSLFLFSA…PSLLDMERGR (79 aa)), are a transit peptide targeting the chloroplast. Positions 28–49 (RLTASASTSASSPPRAGCSRGP) are enriched in low complexity. 2 disordered regions span residues 28-69 (RLTA…LYAR) and 475-508 (FDTN…EFIE). Residues 484–508 (VEDEVEDEDLDEDSDYDSTDDEFIE) are compositionally biased toward acidic residues.

Belongs to the mTERF family.

Its subcellular location is the plastid. The protein localises to the chloroplast stroma. Its function is as follows. Transcription termination factor required for processing and steady-state levels of plastid transcripts. Required for splicing of the chloroplastic group II intron. Required for the accumulation of 16S and 23S ribosomes. The sequence is that of Transcription termination factor MTERF4, chloroplastic from Oryza sativa subsp. japonica (Rice).